The sequence spans 617 residues: Type IV inositol polyphosphate 5-phosphatase 6 (617 aa).

Disordered stretches follow at residues 30–62 (EFQA…KNTK) and 241–330 (DFDP…VLYS). A compositionally biased stretch (low complexity) spans 242–253 (FDPSFRGSSSSH). Over residues 254–290 (RPSDYSRRPSDYSRRPSDYSRRPSDYSRRPSDSRPSD) the composition is skewed to basic and acidic residues. Positions 291–311 (YSRPSDYYSRPSDYSRPSDFS) are enriched in low complexity. Catalytic stretches follow at residues 458 to 473 (DRVI…IALS) and 538 to 553 (KRRT…WFGE).

Belongs to the inositol polyphosphate 5-phosphatase family. As to expression, broadly expressed in emerging organs. Mostly localized in procambium of growing organs. Restricted to vascular differentiating cells of young organs.

The enzyme catalyses a 1,2-diacyl-sn-glycero-3-phospho-(1D-myo-inositol-4,5-bisphosphate) + H2O = a 1,2-diacyl-sn-glycero-3-phospho-(1D-myo-inositol 4-phosphate) + phosphate. The catalysed reaction is a 1,2-diacyl-sn-glycero-3-phospho-(1D-myo-inositol-3,4,5-trisphosphate) + H2O = a 1,2-diacyl-sn-glycero-3-phospho-(1D-myo-inositol-3,4-bisphosphate) + phosphate. Functionally, has phosphatase activity toward PtdIns(4,5)P2 and PtdIns(3,4,5)P3. Required for the patterning of procambium and during the differentiation of vascular tissues. Acts before the acquisition of preprocambial identity. Seems to be also involved in the abscisic acid (ABA) signaling pathway. Acts redundantly with CVL1 for maintaining vascular continuity. Regulates phosphoinositide-dependent VAN3 localization. This chain is Type IV inositol polyphosphate 5-phosphatase 6, found in Arabidopsis thaliana (Mouse-ear cress).